The chain runs to 305 residues: Homoserine O-acetyltransferase (305 aa).

Cys-142 serves as the catalytic Acyl-thioester intermediate. Lys-163 and Ser-192 together coordinate substrate. His-233 serves as the catalytic Proton acceptor. The active site involves Glu-235. Arg-247 provides a ligand contact to substrate.

Belongs to the MetA family.

It localises to the cytoplasm. The enzyme catalyses L-homoserine + acetyl-CoA = O-acetyl-L-homoserine + CoA. The protein operates within amino-acid biosynthesis; L-methionine biosynthesis via de novo pathway; O-acetyl-L-homoserine from L-homoserine: step 1/1. Its function is as follows. Transfers an acetyl group from acetyl-CoA to L-homoserine, forming acetyl-L-homoserine. This Methanomassiliicoccus intestinalis (strain Issoire-Mx1) protein is Homoserine O-acetyltransferase.